A 407-amino-acid chain; its full sequence is Phosphopentomutase (407 aa).

Positions 10, 306, 311, 347, 348, and 359 each coordinate Mn(2+).

It belongs to the phosphopentomutase family. Requires Mn(2+) as cofactor.

It is found in the cytoplasm. It carries out the reaction 2-deoxy-alpha-D-ribose 1-phosphate = 2-deoxy-D-ribose 5-phosphate. The enzyme catalyses alpha-D-ribose 1-phosphate = D-ribose 5-phosphate. The protein operates within carbohydrate degradation; 2-deoxy-D-ribose 1-phosphate degradation; D-glyceraldehyde 3-phosphate and acetaldehyde from 2-deoxy-alpha-D-ribose 1-phosphate: step 1/2. In terms of biological role, isomerase that catalyzes the conversion of deoxy-ribose 1-phosphate (dRib-1-P) and ribose 1-phosphate (Rib-1-P) to deoxy-ribose 5-phosphate (dRib-5-P) and ribose 5-phosphate (Rib-5-P), respectively. This is Phosphopentomutase from Buchnera aphidicola subsp. Acyrthosiphon pisum (strain Tuc7).